A 366-amino-acid chain; its full sequence is Carbamoyl phosphate synthase small chain (366 aa).

The interval 1–174 is CPSase; sequence MQEIPAILVL…GERYTVDNPD (174 aa). 3 residues coordinate L-glutamine: Ser-48, Gly-226, and Gly-228. Residues 178-366 enclose the Glutamine amidotransferase type-1 domain; sequence HVVAFDYGIK…FTELMERLKN (189 aa). The active-site Nucleophile is Cys-256. Residues Leu-257, Gln-260, Asn-298, Gly-300, and Phe-301 each coordinate L-glutamine. Residues His-340 and Glu-342 contribute to the active site.

Belongs to the CarA family. In terms of assembly, composed of two chains; the small (or glutamine) chain promotes the hydrolysis of glutamine to ammonia, which is used by the large (or ammonia) chain to synthesize carbamoyl phosphate. Tetramer of heterodimers (alpha,beta)4.

The catalysed reaction is hydrogencarbonate + L-glutamine + 2 ATP + H2O = carbamoyl phosphate + L-glutamate + 2 ADP + phosphate + 2 H(+). The enzyme catalyses L-glutamine + H2O = L-glutamate + NH4(+). It functions in the pathway amino-acid biosynthesis; L-arginine biosynthesis; carbamoyl phosphate from bicarbonate: step 1/1. Its pathway is pyrimidine metabolism; UMP biosynthesis via de novo pathway; (S)-dihydroorotate from bicarbonate: step 1/3. Small subunit of the glutamine-dependent carbamoyl phosphate synthetase (CPSase). CPSase catalyzes the formation of carbamoyl phosphate from the ammonia moiety of glutamine, carbonate, and phosphate donated by ATP, constituting the first step of 2 biosynthetic pathways, one leading to arginine and/or urea and the other to pyrimidine nucleotides. The small subunit (glutamine amidotransferase) binds and cleaves glutamine to supply the large subunit with the substrate ammonia. In Chlorobaculum tepidum (strain ATCC 49652 / DSM 12025 / NBRC 103806 / TLS) (Chlorobium tepidum), this protein is Carbamoyl phosphate synthase small chain.